Here is a 554-residue protein sequence, read N- to C-terminus: uncharacterized protein (554 aa).

A disordered region spans residues 1–25 (MSSSIPPRLYDMSPTESKKQEDVSE). At Ser13 the chain carries Phosphoserine. 6 consecutive transmembrane segments (helical) span residues 82 to 102 (FFVA…TSLI), 120 to 140 (APYL…VWSL), 149 to 169 (WAFN…GASP), 171 to 191 (FASI…NLPV), 210 to 230 (VMSF…WGLI), and 253 to 273 (FLFT…LVSV). Ser334 carries the phosphoserine modification. The next 6 helical transmembrane spans lie at 364-384 (LAIS…AFPL), 412-432 (SLIV…LVEF), 437-457 (KGTL…STTA), 462-482 (AYLG…GVLY), 497-517 (AVGL…VIAM), and 525-545 (APIF…VFFP).

Belongs to the major facilitator superfamily.

It localises to the endoplasmic reticulum. Its subcellular location is the membrane. This is an uncharacterized protein from Schizosaccharomyces pombe (strain 972 / ATCC 24843) (Fission yeast).